The primary structure comprises 154 residues: Leghemoglobin-1 (154 aa).

The Globin domain maps to Val-3–Lys-151. Ser-46 contributes to the heme b binding site. Position 46 is a phosphoserine (Ser-46). His-64 is a binding site for O2. Lys-67, His-98, and Lys-101 together coordinate heme b. Tyr-139 carries the post-translational modification Nitrated tyrosine.

This sequence belongs to the plant globin family. In terms of assembly, monomer. In terms of processing, nitrated in effective nodules and particularly in hypoxic conditions; this mechanism may play a protective role in the symbiosis by buffering toxic peroxynitrite NO(2)(-). Nitration level decrease during nodule senescence. Phosphorylation at Ser-46 disrupts the molecular environment of its porphyrin ring oxygen binding pocket, thus leading to a reduced oxygen consumption and to the delivery of oxygen O(2) to symbiosomes. Accumulates in developing root nodules and present in roots, especially in the upper part. Detected in leaves at low levels.

Its subcellular location is the cytoplasm. It localises to the cytosol. The protein localises to the nucleus. Functionally, leghemoglobin that reversibly binds oxygen O(2) through a pentacoordinated heme iron. In root nodules, facilitates the diffusion of oxygen to the bacteroids while preventing the bacterial nitrogenase from being inactivated by buffering dioxygen, nitric oxide and carbon monoxide, and promoting the formation of reactive oxygen species (ROS, e.g. H(2)O(2)). This role is essential for symbiotic nitrogen fixation (SNF). This is Leghemoglobin-1 from Lupinus luteus (European yellow lupine).